Here is a 613-residue protein sequence, read N- to C-terminus: MEASKQMRVSRPYKISESSKVYHWPGHSTTVLQRLNEQRLHGLFCDVVLVVEEQQVPAHRNLLAVCSDYFNSMFTLGMREAFQKEVELVGTSYVGLKAVVDFLYSSELELDGSNIDYILETAHLLQIWTVVDFCCEYLEQEVSEDNYLYLQELASIYSLKRLDAFIDSFVLNHFSTLSFTPDFLQTVSVQKLCIYLSSGQVQHTWEYDLLQAALQWLTQQPEREVHTCRVLENIRFPLFPEDILLQRVKLAMCSLLPSEANGEGFVEEAMHYHNSLVAQPVLQTKRTLLRSEECLLFVGGEVSERCLELSDDTCYLDTKNEQWVKETSLPARRSHHCVAVLGGFIFVAGGSFSRDNGGNAASNLLYRYDPRRKQWIKVASMNQRRVDFYLASIEDMLVAVGGRNENGALSSVETYSPKTNSWTYVAGLPRFTYGHAGTIYKDFVYISGGHDYQIGPYRKNLLCYDHRTDVWEERRPMTTARGWHSMCSLGDSIYSIGGSDDHMESMERFDVLGVEAYSPQCNQWTRVAPLLQANSESGVAVWQGRIYILGGYSWESTAFSRAVQVYDREANRWSRGPDLPNAIAGVSACVCALNPRLEEKKKKNKDKRQDRGQ.

The 68-residue stretch at 45–112 (CDVVLVVEEQ…LYSSELELDG (68 aa)) folds into the BTB domain. The BACK domain occupies 147 to 249 (YLYLQELASI…PEDILLQRVK (103 aa)). Kelch repeat units follow at residues 294-343 (CLLF…VLGG), 344-395 (FIFV…SIED), 396-442 (MLVA…IYKD), 444-491 (VYIS…SLGD), 492-544 (SIYS…VWQG), and 545-593 (RIYI…VCAL).

In terms of assembly, interacts with CUL3.

Its pathway is protein modification; protein ubiquitination. In terms of biological role, probable substrate-specific adapter of an E3 ubiquitin-protein ligase complex which mediates the ubiquitination and subsequent proteasomal degradation of target proteins. The polypeptide is Kelch-like protein 36 (Klhl36) (Rattus norvegicus (Rat)).